A 375-amino-acid chain; its full sequence is D-apiose dehydrogenase (375 aa).

Phe-29–Phe-30 contributes to the NAD(+) binding site. Mg(2+)-binding residues include Trp-38, Arg-39, Ile-41, and Ala-44. NAD(+) contacts are provided by residues Asp-51, Ser-93, Gln-111–Lys-112, Asn-140, and Gln-179–Tyr-181. Substrate is bound at residue Lys-112. Residues Gln-179, Asp-192, His-196, and Tyr-246 each coordinate substrate.

Belongs to the Gfo/Idh/MocA family.

The enzyme catalyses D-apiofuranose + NAD(+) = D-apionolactone + NADH + H(+). The protein operates within carbohydrate metabolism. In terms of biological role, involved in catabolism of D-apiose. Catalyzes oxidation of D-apiose to D-apionolactone. The polypeptide is D-apiose dehydrogenase (Paraburkholderia graminis (strain ATCC 700544 / DSM 17151 / LMG 18924 / NCIMB 13744 / C4D1M)).